The sequence spans 214 residues: MATRSPSVVISDDEPGYDLDLFCIPNHYVEDLEKVFIPHGLIMDRTERLARDVMKEMGGHHIVALCVLKGGYKFFADLLDYIKALNRNSDRSIPMTVDFIRLKSYCNDQSTGDIKVIGGDDLSTLTGKNVLIVEDIIDTGKTMQTLLSLVKQYSPKMVKVASLLVKRTSRSVGYRPDFVGFEIPDKFVVGYALDYNEYFRDLNHVCVISETGKA.

Ala-2 is subject to N-acetylalanine. Lys-69 contributes to the GMP binding site. Position 103 is an N6-acetyllysine (Lys-103). A Glycyl lysine isopeptide (Lys-Gly) (interchain with G-Cter in SUMO1); alternate cross-link involves residue Lys-115. A Glycyl lysine isopeptide (Lys-Gly) (interchain with G-Cter in SUMO2); alternate cross-link involves residue Lys-115. GMP is bound by residues 134-142, Lys-166, 186-188, and Asp-194; these read EDIIDTGKT and KFV. Residue Asp-138 is the Proton acceptor of the active site. Thr-142 is modified (phosphothreonine). Asp-194 contributes to the Mg(2+) binding site.

This sequence belongs to the purine/pyrimidine phosphoribosyltransferase family. As to quaternary structure, homotetramer. It depends on Mg(2+) as a cofactor.

It localises to the cytoplasm. The catalysed reaction is IMP + diphosphate = hypoxanthine + 5-phospho-alpha-D-ribose 1-diphosphate. It carries out the reaction GMP + diphosphate = guanine + 5-phospho-alpha-D-ribose 1-diphosphate. The protein operates within purine metabolism; IMP biosynthesis via salvage pathway; IMP from hypoxanthine: step 1/1. Converts guanine to guanosine monophosphate, and hypoxanthine to inosine monophosphate. Transfers the 5-phosphoribosyl group from 5-phosphoribosylpyrophosphate onto the purine. Plays a central role in the generation of purine nucleotides through the purine salvage pathway. This Mus spretus (Western Mediterranean mouse) protein is Hypoxanthine-guanine phosphoribosyltransferase (Hprt1).